We begin with the raw amino-acid sequence, 537 residues long: NAD(P)H-quinone oxidoreductase chain 4 3 (537 aa).

13 consecutive transmembrane segments (helical) span residues 6–26, 36–56, 87–107, 115–135, 136–156, 169–189, 209–229, 243–263, 277–297, 314–334, 335–355, 387–407, and 417–437; these read FPWL…IPII, WYGL…FWHY, LSMP…FAAW, LFYG…VAQD, LLLF…LISI, FILY…ALAF, AIEL…LPIF, SAPG…YALI, FAPV…CCAF, MGFV…GAVL, QMVS…VTYE, LALP…GIAT, and VVVV…LLSL.

The protein belongs to the complex I subunit 4 family.

It localises to the cellular thylakoid membrane. The enzyme catalyses a plastoquinone + NADH + (n+1) H(+)(in) = a plastoquinol + NAD(+) + n H(+)(out). It catalyses the reaction a plastoquinone + NADPH + (n+1) H(+)(in) = a plastoquinol + NADP(+) + n H(+)(out). Its function is as follows. NDH-1 shuttles electrons from NAD(P)H, via FMN and iron-sulfur (Fe-S) centers, to quinones in the respiratory chain. The immediate electron acceptor for the enzyme in this species is believed to be plastoquinone. Couples the redox reaction to proton translocation (for every two electrons transferred, four hydrogen ions are translocated across the cytoplasmic membrane), and thus conserves the redox energy in a proton gradient. The sequence is that of NAD(P)H-quinone oxidoreductase chain 4 3 from Trichormus variabilis (strain ATCC 29413 / PCC 7937) (Anabaena variabilis).